Consider the following 83-residue polypeptide: Large ribosomal subunit protein eL14 (83 aa).

It belongs to the eukaryotic ribosomal protein eL14 family.

The polypeptide is Large ribosomal subunit protein eL14 (Thermococcus onnurineus (strain NA1)).